We begin with the raw amino-acid sequence, 64 residues long: Temporin-ALh (64 aa).

Residues 1–22 (MFPLKKSLLLLFFLATINLSLC) form the signal peptide. Positions 23–46 (EQERNAEEERRDEPDERNAEVEKR) are excised as a propeptide. Serine 62 bears the Serine amide mark.

The protein belongs to the frog skin active peptide (FSAP) family. Temporin subfamily. Expressed by the skin glands.

It is found in the secreted. Functionally, antimicrobial peptide with activity against Gram-positive and Gram-negative bacteria and against fungi. Has been tested against S.aureus (MIC=2.5 ug/mL), B.pumilus (MIC=7.5 ug/mL), B.cereus (MIC=75.0 ug/mL), E.coli (MIC=5.0 ug/mL), B.dysenteriae (MIC=20.0 ug/mL), A.cacoaceticus (MIC=60.0 ug/mL), P.aeruginosa (MIC=2.5 ug/mL) and C.albicans (MIC=2.5 ug/mL). Also shows a weak hemolytic activity. This is Temporin-ALh from Amolops loloensis (Lolokou Sucker Frog).